A 508-amino-acid chain; its full sequence is N-acetyl-D-hexosamine oxidase (508 aa).

An FAD-binding PCMH-type domain is found at 26 to 203 (TDAQAAGRIA…TAYTFARLPE (178 aa)). The segment at residues 64–123 (HCYEDFVSNNPDGAIVDLSLLNAPEVRADGTVRIPAGTQNWNGYLELYKRHNLTLPGGSC) is a cross-link (6-(S-cysteinyl)-8alpha-(pros-histidyl)-FAD (His-Cys)).

This sequence belongs to the oxygen-dependent FAD-linked oxidoreductase family. The cofactor is FAD.

It catalyses the reaction N-acetyl-D-glucosamine + O2 + H2O = N-acetyl-D-glucosaminate + H2O2 + H(+). The catalysed reaction is N-acetyl-D-galactosamine + O2 + H2O = N-acetyl-D-galactosaminate + H2O2 + H(+). The enzyme catalyses N-acetyl-D-glucosamine + O2 = N-acetyl-D-glucosamino-1,5-lactone + H2O2. It carries out the reaction N-acetyl-D-galactosamine + O2 = N-acetyl-D-galactosamino-1,5-lactone + H2O2. In terms of biological role, catalyzes the oxidation of a range of monosaccharides in vitro, displaying the highest activity with N-acetylglucosamine (GlcNAc) and N-acetylgalactosamine (GalNAc), with a reduction of O2 to H2O2. Acts upon the C1 carbon of the GlcNAc or GalNAc molecule, producing the corresponding lactone, which can spontaneously hydrolyze. Its biological function is unclear, but its main function might be connected to extracellular production of hydrogen peroxide to compete with other organisms through oxidative stress, or support the action of peroxidases and peroxygenases. In Ralstonia solanacearum (strain UW551), this protein is N-acetyl-D-hexosamine oxidase.